The sequence spans 495 residues: Hydroxyneurosporene desaturase (495 aa).

Belongs to the carotenoid/retinoid oxidoreductase family.

The enzyme catalyses rhodopin + A = (3E)-3,4-didehydrorhodopin + AH2. It participates in carotenoid biosynthesis; spheroidene biosynthesis. Its function is as follows. Catalyzes the introduction of C-3,4 double bonds into 1-hydroxyneurosporene (1-HO-Neu) to yield demethylspheroidene (DMS). It prefer the acyclic carotenoids such as 1-hydroxylycopene, and 1-hydroxy-gamma-carotene, whereas 1-hydroxy-3,4-didehydrolycopene and 1,1-dihydroxylycopene are much less effective. This chain is Hydroxyneurosporene desaturase (crtD), found in Cereibacter sphaeroides (strain ATCC 17023 / DSM 158 / JCM 6121 / CCUG 31486 / LMG 2827 / NBRC 12203 / NCIMB 8253 / ATH 2.4.1.) (Rhodobacter sphaeroides).